The primary structure comprises 551 residues: Arginine--tRNA ligase (551 aa).

Residues 124-134 (ANPTGPLHIGH) carry the 'HIGH' region motif.

The protein belongs to the class-I aminoacyl-tRNA synthetase family. Monomer.

It is found in the cytoplasm. The catalysed reaction is tRNA(Arg) + L-arginine + ATP = L-arginyl-tRNA(Arg) + AMP + diphosphate. This is Arginine--tRNA ligase from Solidesulfovibrio magneticus (strain ATCC 700980 / DSM 13731 / RS-1) (Desulfovibrio magneticus).